Reading from the N-terminus, the 843-residue chain is Excretory canal abnormal protein 6 (843 aa).

4 disordered regions span residues 54–135 (QLKD…EKKT), 568–601 (TLES…PAKT), 748–767 (TPLS…MTAE), and 773–843 (TMKP…PKWV). 2 stretches are compositionally biased toward pro residues: residues 66–76 (TPPPPPPPPPL) and 83–103 (APPP…PPPI). An FH2 domain is found at 127 to 512 (FLPKKEKKTK…KEEKKETQTT (386 aa)). Polar residues-rich tracts occupy residues 776–792 (PSVS…TSSH) and 819–830 (IPQSPTVTSSAR).

This sequence belongs to the formin homology family. In terms of tissue distribution, expressed in the excretory cell and mostly accumulates at the tip of the excretory cell canals.

Its subcellular location is the cytoplasm. The protein resides in the cytoskeleton. Constitutively active protein required for microtubule and F-actin growth, structural maintenance and organization during excretory cell tubulogenesis. The chain is Excretory canal abnormal protein 6 from Caenorhabditis elegans.